The chain runs to 83 residues: Hainantoxin-III 9 (83 aa).

Residues 1 to 21 form the signal peptide; sequence MKASMFLALAGLALLFVVCYA. Positions 22-48 are excised as a propeptide; sequence SESEEKEFPIELLSKIFAVDVFKGEER. Disulfide bonds link C50/C65, C57/C70, and C64/C77. L81 is subject to Leucine amide.

Belongs to the neurotoxin 10 (Hwtx-1) family. 15 (Hntx-3) subfamily. As to quaternary structure, monomer. As to expression, expressed by the venom gland.

It localises to the secreted. Selective antagonist of neuronal tetrodotoxin (TTX)-sensitive voltage-gated sodium channels (IC(50)=1270 nM on Nav1.1/SCN1A, 270 nM on Nav1.2/SCN2A, 491 nM on Nav1.3/SCN3A and 232 nM on Nav1.7/SCN9A). This toxin suppress Nav1.7 current amplitude without significantly altering the activation, inactivation, and repriming kinetics. Short extreme depolarizations partially activate the toxin-bound channel, indicating voltage-dependent inhibition of this toxin. This toxin increases the deactivation of the Nav1.7 current after extreme depolarizations. The toxin-Nav1.7 complex is gradually dissociated upon prolonged strong depolarizations in a voltage-dependent manner, and the unbound toxin rebinds to Nav1.7 after a long repolarization. Moreover, analysis of chimeric channels showed that the DIIS3-S4 linker is critical for toxin binding to Nav1.7. These data are consistent with this toxin interacting with Nav1.7 site 4 and trapping the domain II voltage sensor in the closed state. The polypeptide is Hainantoxin-III 9 (Cyriopagopus hainanus (Chinese bird spider)).